The sequence spans 88 residues: Large ribosomal subunit protein bL31B (88 aa).

It belongs to the bacterial ribosomal protein bL31 family. Type B subfamily. As to quaternary structure, part of the 50S ribosomal subunit.

The chain is Large ribosomal subunit protein bL31B from Herminiimonas arsenicoxydans.